We begin with the raw amino-acid sequence, 223 residues long: Class E basic helix-loop-helix protein 23 (223 aa).

The disordered stretch occupies residues 32 to 93 (PETTRGFGAS…GVAVDARRRP (62 aa)). The 55-residue stretch at 98-152 (SLRLSINARERRRMHDLNDALDGLRAVIPYAHSPSVRKLSKIATLLLAKNYILMQ) folds into the bHLH domain.

In terms of tissue distribution, expressed in brain and retina.

Its subcellular location is the nucleus. Functionally, may function as transcriptional repressor. May modulate the expression of genes required for the differentiation and/or maintenance of pancreatic and neuronal cell types. May be important for rod bipolar cell maturation. The chain is Class E basic helix-loop-helix protein 23 (Bhlhe23) from Mus musculus (Mouse).